Consider the following 452-residue polypeptide: Maltoporin (452 aa).

The N-terminal stretch at 1 to 25 (MMITLRKLPLAVAVAAGVMSAQAMA) is a signal peptide.

Belongs to the porin LamB (TC 1.B.3) family. In terms of assembly, homotrimer formed of three 18-stranded antiparallel beta-barrels, containing three independent channels.

The protein localises to the cell outer membrane. The enzyme catalyses beta-maltose(in) = beta-maltose(out). Its function is as follows. Involved in the transport of maltose and maltodextrins. The polypeptide is Maltoporin (Salmonella agona (strain SL483)).